Consider the following 740-residue polypeptide: Zinc finger CCCH domain-containing protein 14 (740 aa).

Disordered regions lie at residues 82 to 240, 254 to 314, 390 to 426, and 444 to 469; these read SNKQ…NIKG, VSAG…DDAV, ITPS…DDEE, and SFRD…HHST. Composition is skewed to basic and acidic residues over residues 87–158 and 176–185; these read ETSK…EIQR and EHVRARGEKH. Basic residues predominate over residues 186-200; it reads DRHHHKDHRRGRSHE. Positions 204–214 are enriched in polar residues; sequence ITSTIVRQASA. Polar residues predominate over residues 393-409; that stretch reads SRDSTPTDDSPTMQKWN. Residues 414-426 are compositionally biased toward acidic residues; the sequence is IGDDSEESEDDEE. C3H1-type zinc fingers lie at residues 499–522 and 523–543; these read HVKE…MHPT and TNCK…IHPP. Residues 623-661 are disordered; sequence IKKKPAPGAESEKKEEKSDENESKAEEPKAEVAPVQPKP. Over residues 632–652 the composition is skewed to basic and acidic residues; that stretch reads ESEKKEEKSDENESKAEEPKA. 3 C3H1-type zinc fingers span residues 668–691, 674–691, and 693–709; these read LHSM…KHPK, CRYA…KHPK, and CRFG…FYHK.

It belongs to the ZC3H14 family.

The protein localises to the nucleus. Its subcellular location is the cytoplasm. Functionally, RNA-binding protein involved in the biogenesis of circular RNAs (circRNAs), which are produced by back-splicing circularization of pre-mRNAs. In Caenorhabditis elegans, this protein is Zinc finger CCCH domain-containing protein 14 (sut-2).